The chain runs to 311 residues: 4-hydroxy-3-methylbut-2-enyl diphosphate reductase (311 aa).

C12 provides a ligand contact to [4Fe-4S] cluster. Positions 43 and 81 each coordinate (2E)-4-hydroxy-3-methylbut-2-enyl diphosphate. Dimethylallyl diphosphate contacts are provided by H43 and H81. H43 and H81 together coordinate isopentenyl diphosphate. Residue C103 participates in [4Fe-4S] cluster binding. (2E)-4-hydroxy-3-methylbut-2-enyl diphosphate is bound at residue H131. H131 is a binding site for dimethylallyl diphosphate. H131 contributes to the isopentenyl diphosphate binding site. The Proton donor role is filled by E133. A (2E)-4-hydroxy-3-methylbut-2-enyl diphosphate-binding site is contributed by T170. Residue C198 coordinates [4Fe-4S] cluster. (2E)-4-hydroxy-3-methylbut-2-enyl diphosphate contacts are provided by S226, N228, and S271. Positions 226, 228, and 271 each coordinate dimethylallyl diphosphate. Residues S226, N228, and S271 each contribute to the isopentenyl diphosphate site.

Belongs to the IspH family. The cofactor is [4Fe-4S] cluster.

It carries out the reaction isopentenyl diphosphate + 2 oxidized [2Fe-2S]-[ferredoxin] + H2O = (2E)-4-hydroxy-3-methylbut-2-enyl diphosphate + 2 reduced [2Fe-2S]-[ferredoxin] + 2 H(+). It catalyses the reaction dimethylallyl diphosphate + 2 oxidized [2Fe-2S]-[ferredoxin] + H2O = (2E)-4-hydroxy-3-methylbut-2-enyl diphosphate + 2 reduced [2Fe-2S]-[ferredoxin] + 2 H(+). Its pathway is isoprenoid biosynthesis; dimethylallyl diphosphate biosynthesis; dimethylallyl diphosphate from (2E)-4-hydroxy-3-methylbutenyl diphosphate: step 1/1. It functions in the pathway isoprenoid biosynthesis; isopentenyl diphosphate biosynthesis via DXP pathway; isopentenyl diphosphate from 1-deoxy-D-xylulose 5-phosphate: step 6/6. Catalyzes the conversion of 1-hydroxy-2-methyl-2-(E)-butenyl 4-diphosphate (HMBPP) into a mixture of isopentenyl diphosphate (IPP) and dimethylallyl diphosphate (DMAPP). Acts in the terminal step of the DOXP/MEP pathway for isoprenoid precursor biosynthesis. In Brevibacillus brevis (strain 47 / JCM 6285 / NBRC 100599), this protein is 4-hydroxy-3-methylbut-2-enyl diphosphate reductase.